A 428-amino-acid polypeptide reads, in one-letter code: Adenylosuccinate synthetase (428 aa).

GTP is bound by residues 12–18 (GDEGKGK) and 40–42 (GHT). The active-site Proton acceptor is Asp-13. Mg(2+) is bound by residues Asp-13 and Gly-40. IMP-binding positions include 13–16 (DEGK), 38–41 (NAGH), Thr-128, Arg-142, Gln-223, Thr-238, and Arg-302. The active-site Proton donor is His-41. Position 298–304 (298–304 (VTTGRPR)) interacts with substrate. Residues Arg-304, 330–332 (KLD), and 412–414 (GTG) contribute to the GTP site.

Belongs to the adenylosuccinate synthetase family. As to quaternary structure, homodimer. The cofactor is Mg(2+).

It localises to the cytoplasm. It catalyses the reaction IMP + L-aspartate + GTP = N(6)-(1,2-dicarboxyethyl)-AMP + GDP + phosphate + 2 H(+). It functions in the pathway purine metabolism; AMP biosynthesis via de novo pathway; AMP from IMP: step 1/2. In terms of biological role, plays an important role in the de novo pathway of purine nucleotide biosynthesis. Catalyzes the first committed step in the biosynthesis of AMP from IMP. This chain is Adenylosuccinate synthetase, found in Bifidobacterium animalis subsp. lactis (strain AD011).